The following is a 665-amino-acid chain: Pre-mRNA-processing factor 39 (665 aa).

A compositionally biased stretch (basic and acidic residues) spans 1–11 (MQNSHMEEYRN). The interval 1–28 (MQNSHMEEYRNSDNGSTGNSSEVAVVEH) is disordered. The segment covering 12-22 (SDNGSTGNSSE) has biased composition (polar residues). Ser44 carries the phosphoserine modification. HAT repeat units lie at residues 107 to 139 (NHLM…LEKR), 141 to 173 (DNIK…FLKE), 181 to 216 (ETNT…WENE), 218 to 251 (GNLR…HVQN), 331 to 363 (FEEG…FEIE), 365 to 397 (GTHE…YMEN), and 402 to 434 (GVRH…QQGN). The segment covering 599-622 (QDTLKRKAENGSEEPEEKKAHTED) has biased composition (basic and acidic residues). Positions 599-625 (QDTLKRKAENGSEEPEEKKAHTEDLSS) are disordered.

It belongs to the PRP39 family.

The protein localises to the nucleus. In terms of biological role, involved in pre-mRNA splicing. This is Pre-mRNA-processing factor 39 (Prpf39) from Mus musculus (Mouse).